A 474-amino-acid chain; its full sequence is Cysteine--tRNA ligase (474 aa).

Position 29 (cysteine 29) interacts with Zn(2+). Positions 31–41 (ATVQGEPHVGH) match the 'HIGH' region motif. Residues cysteine 211, histidine 236, and glutamate 240 each contribute to the Zn(2+) site. The 'KMSKS' region motif lies at 267 to 271 (KMSKS). Lysine 270 contributes to the ATP binding site.

This sequence belongs to the class-I aminoacyl-tRNA synthetase family. Monomer. Zn(2+) is required as a cofactor.

It localises to the cytoplasm. It carries out the reaction tRNA(Cys) + L-cysteine + ATP = L-cysteinyl-tRNA(Cys) + AMP + diphosphate. This chain is Cysteine--tRNA ligase, found in Beutenbergia cavernae (strain ATCC BAA-8 / DSM 12333 / CCUG 43141 / JCM 11478 / NBRC 16432 / NCIMB 13614 / HKI 0122).